Here is a 590-residue protein sequence, read N- to C-terminus: Interferon alpha/beta receptor 1 (590 aa).

An N-terminal signal peptide occupies residues 1–26 (MLAVVGAAALVLVAGAPWVLPSAAGG). Residues 27 to 429 (ENLKPPENID…EKTRPGSFST (403 aa)) lie on the Extracellular side of the membrane. Fibronectin type-III domains lie at 31-125 (PPEN…PFYT), 127-226 (HMSP…TTVA), 230-327 (PVPG…FIDS), and 332-425 (LPPP…TRPG). An N-linked (GlcNAc...) asparagine glycan is attached at asparagine 43. Cysteine 78 and cysteine 86 are joined by a disulfide. 3 N-linked (GlcNAc...) asparagine glycosylation sites follow: asparagine 109, asparagine 181, and asparagine 214. 2 disulfides stabilise this stretch: cysteine 199–cysteine 220 and cysteine 284–cysteine 292. N-linked (GlcNAc...) asparagine glycans are attached at residues asparagine 314, asparagine 370, asparagine 409, and asparagine 413. Cysteines 397 and 419 form a disulfide. The chain crosses the membrane as a helical span at residues 430-449 (IWIITGLGVVFFSVMVLYAL). Residues 450–590 (RSVWKYLCHV…ALRTEPALLC (141 aa)) are Cytoplasmic-facing. The interval 483-492 (VLLTAEEHTE) is important for interaction with TYK2. The disordered stretch occupies residues 514–545 (DLRKYSSQTSQDSGNYSNEEEESVGTESGQAV). Lysine 517 is covalently cross-linked (Glycyl lysine isopeptide (Lys-Gly) (interchain with G-Cter in ubiquitin)). Residues 518 to 530 (YSSQTSQDSGNYS) are compositionally biased toward polar residues. Serine 526 carries the phosphoserine modification.

This sequence belongs to the type II cytokine receptor family. In terms of assembly, heterodimer with IFNAR2; forming the receptor for type I interferon. Interacts with TYK2. Interacts with STAT1 and STAT2. Interacts (serine-phosphorylated form) with FBXW11, the substrate recognition component of a SCF (SKP1-CUL1-F-box protein) E3 ubiquitin-protein ligase complex. 3Interacts with SHMT2; this promotes interaction with ABRAXAS2 and the BRISC complex. Interacts with TRIM10; this interaction prevents association between IFNAR1 and TYK2. Post-translationally, ubiquitinated. This leads to its internalization and lysosomal degradation. The 'Lys-63'-linked ubiquitin chains are cleaved off by the BRISC complex; this prevents receptor internalization and degradation. Probable ubiquitination sites have been identified in human, but are poorly conserved across species. Phosphorylated on serine residues in response to interferon binding; this promotes interaction with FBXW11 and ubiquitination.

The protein resides in the cell membrane. It is found in the late endosome. Its subcellular location is the lysosome. Its function is as follows. Together with IFNAR2, forms the heterodimeric receptor for type I interferons (including interferons alpha, beta, epsilon, omega and kappa). Type I interferon binding activates the JAK-STAT signaling cascade, and triggers tyrosine phosphorylation of a number of proteins including JAKs, TYK2, STAT proteins and the IFNR alpha- and beta-subunits themselves. STAT proteins are then phosphorylated by the JAKs, promoting their translocation into the nucleus to regulate expression of interferon-regulated genes. Can also act independently of IFNAR2: form an active IFNB1 receptor by itself and activate a signaling cascade that does not involve activation of the JAK-STAT pathway. This chain is Interferon alpha/beta receptor 1 (Ifnar1), found in Mus musculus (Mouse).